The primary structure comprises 633 residues: NADH-quinone oxidoreductase subunit L (633 aa).

The next 14 helical transmembrane spans lie at 8–28, 34–54, 95–115, 123–143, 188–208, 209–229, 251–271, 284–304, 322–342, 382–402, 412–432, 468–488, 505–525, and 613–633; these read HYTW…LFGG, WGHL…AMLL, FVLL…GYMA, FFGY…ADNY, LAVG…AGVF, AGVP…MLLG, TPVS…YLIV, QLAV…IGCA, YMVL…MHLL, FATF…AGFF, LGAG…GAGV, MILL…GGTL, ALPT…GIAV, and ALSM…VQLW.

Belongs to the complex I subunit 5 family.

Its subcellular location is the cell membrane. It catalyses the reaction a quinone + NADH + 5 H(+)(in) = a quinol + NAD(+) + 4 H(+)(out). NDH-1 shuttles electrons from NADH, via FMN and iron-sulfur (Fe-S) centers, to quinones in the respiratory chain. The immediate electron acceptor for the enzyme in this species is believed to be menaquinone. Couples the redox reaction to proton translocation (for every two electrons transferred, four hydrogen ions are translocated across the cytoplasmic membrane), and thus conserves the redox energy in a proton gradient. The sequence is that of NADH-quinone oxidoreductase subunit L (nuoL) from Mycobacterium tuberculosis (strain CDC 1551 / Oshkosh).